A 232-amino-acid polypeptide reads, in one-letter code: Protein fmp52-1, mitochondrial (232 aa).

A mitochondrion-targeting transit peptide spans 1–36 (MASVALIGCTGMVGSHILTSLLAHPSVARVDTISRR).

This sequence belongs to the FMP52 family.

It localises to the mitochondrion outer membrane. The protein is Protein fmp52-1, mitochondrial (fmp521) of Aspergillus terreus (strain NIH 2624 / FGSC A1156).